Here is a 450-residue protein sequence, read N- to C-terminus: Exodeoxyribonuclease 7 large subunit (450 aa).

It belongs to the XseA family. In terms of assembly, heterooligomer composed of large and small subunits.

Its subcellular location is the cytoplasm. The catalysed reaction is Exonucleolytic cleavage in either 5'- to 3'- or 3'- to 5'-direction to yield nucleoside 5'-phosphates.. In terms of biological role, bidirectionally degrades single-stranded DNA into large acid-insoluble oligonucleotides, which are then degraded further into small acid-soluble oligonucleotides. The protein is Exodeoxyribonuclease 7 large subunit of Shewanella frigidimarina (strain NCIMB 400).